The chain runs to 436 residues: 3-ketoacyl-CoA thiolase (436 aa).

The Acyl-thioester intermediate role is filled by Cys99. Active-site proton acceptor residues include His392 and Cys422.

The protein belongs to the thiolase-like superfamily. Thiolase family. As to quaternary structure, heterotetramer of two alpha chains (FadJ) and two beta chains (FadI).

It is found in the cytoplasm. It catalyses the reaction an acyl-CoA + acetyl-CoA = a 3-oxoacyl-CoA + CoA. The protein operates within lipid metabolism; fatty acid beta-oxidation. Functionally, catalyzes the final step of fatty acid oxidation in which acetyl-CoA is released and the CoA ester of a fatty acid two carbons shorter is formed. The chain is 3-ketoacyl-CoA thiolase from Salmonella paratyphi B (strain ATCC BAA-1250 / SPB7).